Here is a 168-residue protein sequence, read N- to C-terminus: Glycine-rich RNA-binding protein 2 (168 aa).

The RRM domain occupies Y8–S86. The tract at residues G148 to N168 is disordered.

Possibly has a role in RNA transcription or processing during stress. The sequence is that of Glycine-rich RNA-binding protein 2 (GRP2) from Sorghum bicolor (Sorghum).